Consider the following 65-residue polypeptide: DNA gyrase inhibitor YacG (65 aa).

The Zn(2+) site is built by Cys-8, Cys-11, Cys-27, and Cys-31. Residues 43 to 65 (SYRIPDTGKDSEKQENDPSGSEK) form a disordered region. Positions 48-65 (DTGKDSEKQENDPSGSEK) are enriched in basic and acidic residues.

Belongs to the DNA gyrase inhibitor YacG family. As to quaternary structure, interacts with GyrB. Zn(2+) is required as a cofactor.

Its function is as follows. Inhibits all the catalytic activities of DNA gyrase by preventing its interaction with DNA. Acts by binding directly to the C-terminal domain of GyrB, which probably disrupts DNA binding by the gyrase. The protein is DNA gyrase inhibitor YacG of Nitrosospira multiformis (strain ATCC 25196 / NCIMB 11849 / C 71).